A 425-amino-acid chain; its full sequence is Histidine--tRNA ligase (425 aa).

This sequence belongs to the class-II aminoacyl-tRNA synthetase family. In terms of assembly, homodimer.

Its subcellular location is the cytoplasm. It catalyses the reaction tRNA(His) + L-histidine + ATP = L-histidyl-tRNA(His) + AMP + diphosphate + H(+). This Shewanella sp. (strain MR-4) protein is Histidine--tRNA ligase.